A 90-amino-acid polypeptide reads, in one-letter code: Acylphosphatase (90 aa).

An Acylphosphatase-like domain is found at 3 to 90; it reads RVLIKLTGKV…DIYLDFSIVR (88 aa). Catalysis depends on residues Arg-18 and Asn-36.

It belongs to the acylphosphatase family.

It carries out the reaction an acyl phosphate + H2O = a carboxylate + phosphate + H(+). This Shewanella oneidensis (strain ATCC 700550 / JCM 31522 / CIP 106686 / LMG 19005 / NCIMB 14063 / MR-1) protein is Acylphosphatase (acyP).